We begin with the raw amino-acid sequence, 199 residues long: Small ribosomal subunit protein uS4 (199 aa).

Residues 94 to 157 (SRLDNLVYRA…RKLKLVQEAL (64 aa)) form the S4 RNA-binding domain.

Belongs to the universal ribosomal protein uS4 family. Part of the 30S ribosomal subunit. Contacts protein S5. The interaction surface between S4 and S5 is involved in control of translational fidelity.

Its function is as follows. One of the primary rRNA binding proteins, it binds directly to 16S rRNA where it nucleates assembly of the body of the 30S subunit. Functionally, with S5 and S12 plays an important role in translational accuracy. The protein is Small ribosomal subunit protein uS4 of Mycoplasmopsis synoviae (strain 53) (Mycoplasma synoviae).